We begin with the raw amino-acid sequence, 122 residues long: Large ribosomal subunit protein uL14 (122 aa).

This sequence belongs to the universal ribosomal protein uL14 family. In terms of assembly, part of the 50S ribosomal subunit. Forms a cluster with proteins L3 and L19. In the 70S ribosome, L14 and L19 interact and together make contacts with the 16S rRNA in bridges B5 and B8.

Binds to 23S rRNA. Forms part of two intersubunit bridges in the 70S ribosome. In Bordetella avium (strain 197N), this protein is Large ribosomal subunit protein uL14.